A 274-amino-acid chain; its full sequence is Triosephosphate isomerase (274 aa).

13–15 (NWK) contacts substrate. Catalysis depends on His-98, which acts as the Electrophile. Catalysis depends on Glu-170, which acts as the Proton acceptor. The substrate site is built by Gly-176 and Ser-216.

The protein belongs to the triosephosphate isomerase family. Homodimer.

It is found in the cytoplasm. The enzyme catalyses D-glyceraldehyde 3-phosphate = dihydroxyacetone phosphate. Its pathway is carbohydrate biosynthesis; gluconeogenesis. The protein operates within carbohydrate degradation; glycolysis; D-glyceraldehyde 3-phosphate from glycerone phosphate: step 1/1. Functionally, involved in the gluconeogenesis. Catalyzes stereospecifically the conversion of dihydroxyacetone phosphate (DHAP) to D-glyceraldehyde-3-phosphate (G3P). The sequence is that of Triosephosphate isomerase from Aster yellows witches'-broom phytoplasma (strain AYWB).